Consider the following 163-residue polypeptide: Cyclic pyranopterin monophosphate synthase (163 aa).

Residues 75–77 (LCH) and 113–114 (ME) contribute to the substrate site. The active site involves D128.

Belongs to the MoaC family. Homohexamer; trimer of dimers.

It catalyses the reaction (8S)-3',8-cyclo-7,8-dihydroguanosine 5'-triphosphate = cyclic pyranopterin phosphate + diphosphate. It functions in the pathway cofactor biosynthesis; molybdopterin biosynthesis. In terms of biological role, catalyzes the conversion of (8S)-3',8-cyclo-7,8-dihydroguanosine 5'-triphosphate to cyclic pyranopterin monophosphate (cPMP). The polypeptide is Cyclic pyranopterin monophosphate synthase (Jannaschia sp. (strain CCS1)).